A 515-amino-acid polypeptide reads, in one-letter code: Na(+)/H(+) antiporter NhaB (515 aa).

Helical transmembrane passes span 23 to 43 (IIVF…FIAG), 44 to 64 (WCLV…YPLQ), 88 to 108 (IMAS…IYFM), 119 to 139 (LLIT…SAAF), 143 to 163 (FLDA…FYGV), 202 to 222 (LMMH…VGEP), 238 to 258 (FFIR…ITCV), 303 to 323 (GIIG…VGLI), 324 to 344 (GLSV…STIG), 357 to 377 (LVVF…GPII), 389 to 409 (LLLF…VFVA), 447 to 467 (ATPN…APLI), and 477 to 497 (MALP…EYIL).

The protein belongs to the NhaB Na(+)/H(+) (TC 2.A.34) antiporter family.

It localises to the cell inner membrane. The catalysed reaction is 2 Na(+)(in) + 3 H(+)(out) = 2 Na(+)(out) + 3 H(+)(in). In terms of biological role, na(+)/H(+) antiporter that extrudes sodium in exchange for external protons. The polypeptide is Na(+)/H(+) antiporter NhaB (Mannheimia succiniciproducens (strain KCTC 0769BP / MBEL55E)).